The chain runs to 88 residues: UPF0297 protein BPUM_2379 (88 aa).

This sequence belongs to the UPF0297 family.

The protein is UPF0297 protein BPUM_2379 of Bacillus pumilus (strain SAFR-032).